The chain runs to 64 residues: Alpha-like toxin Lqh6 (64 aa).

In terms of domain architecture, LCN-type CS-alpha/beta spans 2–63 (RDGYIAQPEN…GIIVDGVKCH (62 aa)). Cystine bridges form between Cys-12/Cys-62, Cys-16/Cys-34, Cys-20/Cys-44, and Cys-24/Cys-46. Position 64 is a lysine amide (Lys-64).

This sequence belongs to the long (4 C-C) scorpion toxin superfamily. Sodium channel inhibitor family. Alpha subfamily. In terms of tissue distribution, expressed by the venom gland.

The protein localises to the secreted. Its function is as follows. Alpha toxins bind voltage-independently at site-3 of sodium channels (Nav) and inhibit the inactivation of the activated channels, thereby blocking neuronal transmission. This toxin is highly toxic to insects and mice, and inhibits the binding of alpha-toxin to cockroach neuronal membranes. This is Alpha-like toxin Lqh6 from Leiurus hebraeus (Hebrew deathstalker scorpion).